A 623-amino-acid chain; its full sequence is tRNA uridine 5-carboxymethylaminomethyl modification enzyme MnmG (623 aa).

Residues 11–16 (GAGHAG), V123, and S178 each bind FAD. Position 270–284 (270–284 (GPRYCPSIETKIVTF)) interacts with NAD(+). Q367 serves as a coordination point for FAD.

This sequence belongs to the MnmG family. Homodimer. Heterotetramer of two MnmE and two MnmG subunits. FAD serves as cofactor.

Its subcellular location is the cytoplasm. NAD-binding protein involved in the addition of a carboxymethylaminomethyl (cmnm) group at the wobble position (U34) of certain tRNAs, forming tRNA-cmnm(5)s(2)U34. The protein is tRNA uridine 5-carboxymethylaminomethyl modification enzyme MnmG of Phocaeicola vulgatus (strain ATCC 8482 / DSM 1447 / JCM 5826 / CCUG 4940 / NBRC 14291 / NCTC 11154) (Bacteroides vulgatus).